A 116-amino-acid chain; its full sequence is Large ribosomal subunit protein bL19 (116 aa).

It belongs to the bacterial ribosomal protein bL19 family.

Functionally, this protein is located at the 30S-50S ribosomal subunit interface and may play a role in the structure and function of the aminoacyl-tRNA binding site. The sequence is that of Large ribosomal subunit protein bL19 from Flavobacterium psychrophilum (strain ATCC 49511 / DSM 21280 / CIP 103535 / JIP02/86).